We begin with the raw amino-acid sequence, 267 residues long: Putative hydro-lyase RALTA_B1245 (267 aa).

This sequence belongs to the D-glutamate cyclase family.

In Cupriavidus taiwanensis (strain DSM 17343 / BCRC 17206 / CCUG 44338 / CIP 107171 / LMG 19424 / R1) (Ralstonia taiwanensis (strain LMG 19424)), this protein is Putative hydro-lyase RALTA_B1245.